Consider the following 318-residue polypeptide: Pantothenate kinase (318 aa).

96–103 lines the ATP pocket; that stretch reads GSVSVGKS.

This sequence belongs to the prokaryotic pantothenate kinase family.

It localises to the cytoplasm. The enzyme catalyses (R)-pantothenate + ATP = (R)-4'-phosphopantothenate + ADP + H(+). It functions in the pathway cofactor biosynthesis; coenzyme A biosynthesis; CoA from (R)-pantothenate: step 1/5. The chain is Pantothenate kinase from Bradyrhizobium sp. (strain BTAi1 / ATCC BAA-1182).